We begin with the raw amino-acid sequence, 291 residues long: Nucleotide-binding protein LGAS_1315 (291 aa).

13–20 (GMSGAGKT) is a binding site for ATP. 63-66 (DLRV) is a binding site for GTP.

It belongs to the RapZ-like family.

Functionally, displays ATPase and GTPase activities. The chain is Nucleotide-binding protein LGAS_1315 from Lactobacillus gasseri (strain ATCC 33323 / DSM 20243 / BCRC 14619 / CIP 102991 / JCM 1131 / KCTC 3163 / NCIMB 11718 / NCTC 13722 / AM63).